The chain runs to 160 residues: Cytochrome b6-f complex subunit 4 (160 aa).

The next 3 membrane-spanning stretches (helical) occupy residues 36 to 56 (LLYI…GLAV), 95 to 115 (LLGV…PFLE), and 131 to 151 (TVFL…TLPI).

This sequence belongs to the cytochrome b family. PetD subfamily. As to quaternary structure, the 4 large subunits of the cytochrome b6-f complex are cytochrome b6, subunit IV (17 kDa polypeptide, petD), cytochrome f and the Rieske protein, while the 4 small subunits are petG, petL, petM and petN. The complex functions as a dimer.

It localises to the plastid. The protein resides in the chloroplast thylakoid membrane. In terms of biological role, component of the cytochrome b6-f complex, which mediates electron transfer between photosystem II (PSII) and photosystem I (PSI), cyclic electron flow around PSI, and state transitions. The sequence is that of Cytochrome b6-f complex subunit 4 from Lotus japonicus (Lotus corniculatus var. japonicus).